The primary structure comprises 427 residues: 5'-deoxyadenosine deaminase (427 aa).

Zn(2+) is bound by residues His62 and His64. 2 residues coordinate substrate: Glu91 and His183. His210 contributes to the Zn(2+) binding site. Substrate is bound by residues Glu213 and Asp298. Residue Asp298 participates in Zn(2+) binding.

It belongs to the metallo-dependent hydrolases superfamily. MTA/SAH deaminase family. Homotetramer. It depends on Zn(2+) as a cofactor.

The catalysed reaction is 5'-deoxyadenosine + H2O + H(+) = 5'-deoxyinosine + NH4(+). It carries out the reaction S-adenosyl-L-homocysteine + H2O + H(+) = S-inosyl-L-homocysteine + NH4(+). The enzyme catalyses S-methyl-5'-thioadenosine + H2O + H(+) = S-methyl-5'-thioinosine + NH4(+). It catalyses the reaction adenosine + H2O + H(+) = inosine + NH4(+). It functions in the pathway amino-acid biosynthesis; S-adenosyl-L-methionine biosynthesis. Its function is as follows. Catalyzes the deamination of three SAM-derived enzymatic products, namely 5'-deoxyadenosine, S-adenosyl-L-homocysteine, and 5'-methylthioadenosine, to produce the inosine analogs. Can also deaminate adenosine. The preferred substrate for this enzyme is 5'-deoxyadenosine, but all these substrates are efficiently deaminated. Likely functions in a S-adenosyl-L-methionine (SAM) recycling pathway from S-adenosyl-L-homocysteine (SAH) produced from SAM-dependent methylation reactions. May also be involved in the recycling of 5'-deoxyadenosine, whereupon the 5'-deoxyribose moiety of 5'-deoxyinosine is further metabolized to deoxyhexoses used for the biosynthesis of aromatic amino acids in methanogens. This Methanothermobacter thermautotrophicus (strain ATCC 29096 / DSM 1053 / JCM 10044 / NBRC 100330 / Delta H) (Methanobacterium thermoautotrophicum) protein is 5'-deoxyadenosine deaminase.